The primary structure comprises 964 residues: Integrator complex subunit 7 (964 aa).

Over residues 937–958 (QQLRHQLQQQQQNVPQPAAQRN) the composition is skewed to low complexity. A disordered region spans residues 937–964 (QQLRHQLQQQQQNVPQPAAQRNISTRFQ).

The protein belongs to the Integrator subunit 7 family. As to quaternary structure, component of the Integrator complex, composed of core subunits INTS1, INTS2, INTS3, INTS4, INTS5, INTS6, INTS7, INTS8, INTS9/RC74, INTS10, INTS11/CPSF3L, INTS12, INTS13, INTS14 and INTS15. The core complex associates with protein phosphatase 2A subunits PPP2CA and PPP2R1A, to form the Integrator-PP2A (INTAC) complex.

Its subcellular location is the nucleus. It localises to the chromosome. The protein resides in the cytoplasm. Functionally, component of the integrator complex, a multiprotein complex that terminates RNA polymerase II (Pol II) transcription in the promoter-proximal region of genes. The integrator complex provides a quality checkpoint during transcription elongation by driving premature transcription termination of transcripts that are unfavorably configured for transcriptional elongation: the complex terminates transcription by (1) catalyzing dephosphorylation of the C-terminal domain (CTD) of Pol II subunit POLR2A/RPB1 and SUPT5H/SPT5, (2) degrading the exiting nascent RNA transcript via endonuclease activity and (3) promoting the release of Pol II from bound DNA. The integrator complex is also involved in terminating the synthesis of non-coding Pol II transcripts, such as enhancer RNAs (eRNAs), small nuclear RNAs (snRNAs), telomerase RNAs and long non-coding RNAs (lncRNAs). Essential during embryogenesis for eye development. The sequence is that of Integrator complex subunit 7 (ints7) from Danio rerio (Zebrafish).